Here is a 71-residue protein sequence, read N- to C-terminus: Small ribosomal subunit protein bS21 (71 aa).

The segment covering 34–44 (RREHYEKPTSE) has biased composition (basic and acidic residues). A disordered region spans residues 34-71 (RREHYEKPTSERKRKKAAAVKRHAKKLSRDNARRTRLY). The span at 45–59 (RKRKKAAAVKRHAKK) shows a compositional bias: basic residues. Residues 60-71 (LSRDNARRTRLY) show a composition bias toward basic and acidic residues.

It belongs to the bacterial ribosomal protein bS21 family.

The polypeptide is Small ribosomal subunit protein bS21 (Idiomarina loihiensis (strain ATCC BAA-735 / DSM 15497 / L2-TR)).